The sequence spans 461 residues: Putative cytochrome P450 132 (461 aa).

Residue Cys409 participates in heme binding.

It belongs to the cytochrome P450 family. Heme is required as a cofactor.

This chain is Putative cytochrome P450 132 (cyp132), found in Mycobacterium bovis (strain ATCC BAA-935 / AF2122/97).